A 433-amino-acid polypeptide reads, in one-letter code: 23S rRNA (uracil(1939)-C(5))-methyltransferase RlmD (433 aa).

In terms of domain architecture, TRAM spans Arg10 to Arg68. [4Fe-4S] cluster contacts are provided by Cys81, Cys87, Cys90, and Cys162. Gln265, Phe294, Asn299, Glu315, Asn342, and Asp363 together coordinate S-adenosyl-L-methionine. Residue Cys389 is the Nucleophile of the active site.

It belongs to the class I-like SAM-binding methyltransferase superfamily. RNA M5U methyltransferase family. RlmD subfamily.

The catalysed reaction is uridine(1939) in 23S rRNA + S-adenosyl-L-methionine = 5-methyluridine(1939) in 23S rRNA + S-adenosyl-L-homocysteine + H(+). Catalyzes the formation of 5-methyl-uridine at position 1939 (m5U1939) in 23S rRNA. In Escherichia coli O157:H7, this protein is 23S rRNA (uracil(1939)-C(5))-methyltransferase RlmD.